A 31-amino-acid polypeptide reads, in one-letter code: Cycloviolin-A (31 aa).

The cyclopeptide (Gly-Asn) cross-link spans 1-31 (GVIPCGESCVFIPCISAAIGCSCKNKVCYRN). Intrachain disulfides connect C5/C21, C9/C23, and C14/C28.

This is a cyclic peptide.

Probably participates in a plant defense mechanism. Has anti-HIV activity. This is Cycloviolin-A from Leonia cymosa (Sacha uba).